The following is a 384-amino-acid chain: V-type proton ATPase subunit C 2 (384 aa).

This sequence belongs to the V-ATPase C subunit family. As to quaternary structure, V-ATPase is a heteromultimeric enzyme made up of two complexes: the ATP-hydrolytic V1 complex and the proton translocation V0 complex. The V1 complex consists of three catalytic AB heterodimers that form a heterohexamer, three peripheral stalks each consisting of EG heterodimers, one central rotor including subunits D and F, and the regulatory subunits C and H. The proton translocation complex V0 consists of the proton transport subunit a, a ring of proteolipid subunits c9c'', rotary subunit d, subunits e and f, and the accessory subunits vah-19/Ac45 and vah-20/PRR.

Its function is as follows. Subunit of the V1 complex of vacuolar(H+)-ATPase (V-ATPase), a multisubunit enzyme composed of a peripheral complex (V1) that hydrolyzes ATP and a membrane integral complex (V0) that translocates protons. V-ATPase is responsible for acidifying and maintaining the pH of intracellular compartments and in some cell types, is targeted to the plasma membrane, where it is responsible for acidifying the extracellular environment. Subunit C is necessary for the assembly of the catalytic sector of the enzyme and is likely to have a specific function in its catalytic activity. This Ascidia sydneiensis samea (Vanadium-rich ascidian) protein is V-type proton ATPase subunit C 2 (VATC).